The primary structure comprises 127 residues: Auxin-responsive protein SAUR76 (127 aa).

The segment at serine 20 to valine 40 is disordered.

The protein belongs to the ARG7 family. Expressed in cotyledons, hypocotyls and roots of young seedlings. Expressed in emerging lateral root, leaves, flowers, stamens and filaments.

The protein localises to the nucleus. It localises to the cytoplasm. Its subcellular location is the cell membrane. Its function is as follows. May be involved in the regulation of ethylene receptor signaling. Promotes cell expansion and plant growth. Involved in the regulation of cell elongation. In Arabidopsis thaliana (Mouse-ear cress), this protein is Auxin-responsive protein SAUR76.